A 163-amino-acid chain; its full sequence is Nucleotide-binding protein Mvan_0997 (163 aa).

Belongs to the YajQ family.

Functionally, nucleotide-binding protein. The chain is Nucleotide-binding protein Mvan_0997 from Mycolicibacterium vanbaalenii (strain DSM 7251 / JCM 13017 / BCRC 16820 / KCTC 9966 / NRRL B-24157 / PYR-1) (Mycobacterium vanbaalenii).